Consider the following 348-residue polypeptide: Protein RecA (348 aa).

An ATP-binding site is contributed by 64–71; sequence GPESSGKT. The span at 324–335 shows a compositional bias: basic and acidic residues; it reads EYEIDGSNKEPL. The interval 324–348 is disordered; that stretch reads EYEIDGSNKEPLAETEETLSLLDDE. Residues 336 to 348 show a composition bias toward acidic residues; sequence AETEETLSLLDDE.

This sequence belongs to the RecA family.

It localises to the cytoplasm. In terms of biological role, can catalyze the hydrolysis of ATP in the presence of single-stranded DNA, the ATP-dependent uptake of single-stranded DNA by duplex DNA, and the ATP-dependent hybridization of homologous single-stranded DNAs. It interacts with LexA causing its activation and leading to its autocatalytic cleavage. This Listeria ivanovii protein is Protein RecA.